Consider the following 104-residue polypeptide: uncharacterized protein (104 aa).

Positions 1 to 24 (MISTEKSSDAVAMHCPSGDQHNSE) are disordered.

This is an uncharacterized protein from Saccharomyces cerevisiae (strain ATCC 204508 / S288c) (Baker's yeast).